A 366-amino-acid polypeptide reads, in one-letter code: uncharacterized protein (366 aa).

The CP-type G domain maps to 59–222; the sequence is LNILHGIGET…LYDTPGIINN (164 aa).

Belongs to the TRAFAC class YlqF/YawG GTPase family.

Functionally, binds GTP and GDP. This is an uncharacterized protein from Bacillus subtilis (strain 168).